Reading from the N-terminus, the 356-residue chain is UDP-N-acetylglucosamine--N-acetylmuramyl-(pentapeptide) pyrophosphoryl-undecaprenol N-acetylglucosamine transferase (356 aa).

Residues S195 and Q287 each coordinate UDP-N-acetyl-alpha-D-glucosamine.

This sequence belongs to the glycosyltransferase 28 family. MurG subfamily.

Its subcellular location is the cell membrane. It carries out the reaction Mur2Ac(oyl-L-Ala-gamma-D-Glu-L-Lys-D-Ala-D-Ala)-di-trans,octa-cis-undecaprenyl diphosphate + UDP-N-acetyl-alpha-D-glucosamine = beta-D-GlcNAc-(1-&gt;4)-Mur2Ac(oyl-L-Ala-gamma-D-Glu-L-Lys-D-Ala-D-Ala)-di-trans,octa-cis-undecaprenyl diphosphate + UDP + H(+). It participates in cell wall biogenesis; peptidoglycan biosynthesis. Functionally, cell wall formation. Catalyzes the transfer of a GlcNAc subunit on undecaprenyl-pyrophosphoryl-MurNAc-pentapeptide (lipid intermediate I) to form undecaprenyl-pyrophosphoryl-MurNAc-(pentapeptide)GlcNAc (lipid intermediate II). This Streptococcus gordonii (strain Challis / ATCC 35105 / BCRC 15272 / CH1 / DL1 / V288) protein is UDP-N-acetylglucosamine--N-acetylmuramyl-(pentapeptide) pyrophosphoryl-undecaprenol N-acetylglucosamine transferase.